Consider the following 85-residue polypeptide: Large ribosomal subunit protein bL27 (85 aa).

A disordered region spans residues 1 to 21; sequence MAHKKAGGSTRNGRDSESKRL.

The protein belongs to the bacterial ribosomal protein bL27 family.

This is Large ribosomal subunit protein bL27 from Photorhabdus laumondii subsp. laumondii (strain DSM 15139 / CIP 105565 / TT01) (Photorhabdus luminescens subsp. laumondii).